A 2547-amino-acid chain; its full sequence is Piezo-type mechanosensitive ion channel component 1 (2547 aa).

Residues 1–12 (MEPHVLGAGLYW) are Cytoplasmic-facing. A helical membrane pass occupies residues 13 to 25 (LLLPCTLLAASLL). At 26-28 (RFN) the chain is on the extracellular side. The chain crosses the membrane as a helical span at residues 29-44 (ALSLVYLLFLLLLPWL). Residues 45-58 (PGPSRHSIPGHTGR) lie on the Cytoplasmic side of the membrane. The helical transmembrane segment at 59-81 (LLRALLCLSLLFLVAHLAFQICL) threads the bilayer. Over 82–121 (HTVPHLDQFLGQNGSLWVKVSQHIGVTRLDLKDIFNTTRL) the chain is Extracellular. Asn94 is a glycosylation site (N-linked (GlcNAc...) asparagine). The chain crosses the membrane as a helical span at residues 122 to 138 (VAPDLGVLLASSLCLGL). The Cytoplasmic portion of the chain corresponds to 139-201 (CGRLTRKAGQ…ASRFRVTAHW (63 aa)). Residues 202 to 221 (LLMTSGRTLVIVLLALAGIA) traverse the membrane as a helical segment. At 222 to 223 (HP) the chain is on the extracellular side. The helical transmembrane segment at 224-243 (SAFSSIYLVVFLAICTWWSC) threads the bilayer. The Cytoplasmic segment spans residues 244 to 254 (HFPLSPLGFNT). The chain crosses the membrane as a helical span at residues 255–275 (LCVMVSCFGAGHLICLYCYQT). The Extracellular segment spans residues 276-316 (PFIQDMLPPGNIWARLFGLKNFVDLPNYSSPNALVLNTKHA). A helical transmembrane segment spans residues 317 to 337 (WPIYVSPGILLLLYYTATSLL). Residues 338-424 (KLHKSCPSEL…EMSPLHGLGH (87 aa)) are Cytoplasmic-facing. The interval 347–387 (LRKETPREDEEHELELDHLEPEPQARDATQGEMPMTTEPDL) is disordered. A compositionally biased stretch (basic and acidic residues) spans 361 to 371 (ELDHLEPEPQA). The helical transmembrane segment at 425–445 (LIMDQSYVCALIAMMVWSIMY) threads the bilayer. Over 446-447 (HS) the chain is Extracellular. Residues 448–463 (WLTFVLLLWACLIWTV) form a helical membrane-spanning segment. Over 464-468 (RSRHQ) the chain is Cytoplasmic. The chain crosses the membrane as a helical span at residues 469 to 491 (LAMLCSPCILLYGLTLCCLRYVW). Over 492–518 (AMELPELPTTLGPVSLHQLGLEHTRYP) the chain is Extracellular. Residues 519–536 (CLDLGAMLLYLLTFWLLL) form a helical membrane-spanning segment. The Cytoplasmic portion of the chain corresponds to 537–580 (RQFVKEKLLKKQKVPAALLEVTVADTEPTQTQTLLRSLGELVTG). A helical transmembrane segment spans residues 581 to 601 (IYVKYWIYVCAGMFIVVSFAG). Position 602 (Arg602) is a topological domain, extracellular. Residues 603-623 (LVVYKIVYMFLFLLCLTLFQV) form a helical membrane-spanning segment. Topologically, residues 624 to 633 (YYTLWRKLLR) are cytoplasmic. Residues 634–655 (VFWWLVVAYTMLVLIAVYTFQF) traverse the membrane as a helical segment. The Extracellular portion of the chain corresponds to 656–685 (QDFPTYWRNLTGFTDEQLGDLGLEQFSVSE). Residues 686–702 (LFSSILIPGFFLLACIL) traverse the membrane as a helical segment. The Cytoplasmic portion of the chain corresponds to 703–811 (QLHYFHRPFM…RRLLELHVFK (109 aa)). Ser758 carries the phosphoserine modification. The helical transmembrane segment at 812–823 (LVALYTVWVALK) threads the bilayer. Residues 824–826 (EVS) are Extracellular-facing. A helical membrane pass occupies residues 827 to 840 (VMNLLLVVLWAFAL). Topologically, residues 841–854 (PYPRFRPMASCLST) are cytoplasmic. Residues 855–869 (VWTCIIIVCKMLYQL) form a helical membrane-spanning segment. Residues 870–921 (KIVNPHEYSSNCTEPFPNNTNLQPLEINQSLLYRGPVDPANWFGVRKGYPNL) lie on the Extracellular side of the membrane. Residues 922–949 (GYIQNHLQILLLLVFEAVVYRRQEHYRR) traverse the membrane as a helical segment. The Cytoplasmic segment spans residues 950–989 (QHQQAPLPAQAVCADGTRQRLDQDLLSCLKYFINFFFYKF). A helical transmembrane segment spans residues 990-1005 (GLEICFLMAVNVIGQR). Residues 1006–1007 (MN) are Extracellular-facing. The helical transmembrane segment at 1008–1023 (FMVILHGCWLVAILTR) threads the bilayer. The Cytoplasmic segment spans residues 1024–1036 (RRREAIARLWPNY). Residues 1037 to 1052 (CLFLTLFLLYQYLLCL) form a helical membrane-spanning segment. Topologically, residues 1053-1091 (GMPPALCIDYPWRWSKAIPMNSALIKWLYLPDFFRAPNS) are extracellular. A helical transmembrane segment spans residues 1092–1113 (TNLISDFLLLLCASQQWQVFSA). Topologically, residues 1114-1148 (ERTEEWQRMAGINTDHLEPLRGEPNPIPNFIHCRS) are cytoplasmic. A helical membrane pass occupies residues 1149–1175 (YLDMLKVAVFRYLFWLVLVVVFVAGAT). Residues 1176–1180 (RISIF) are Extracellular-facing. Residues 1181 to 1199 (GLGYLLACFYLLLFGTTLL) form a helical membrane-spanning segment. Over 1200–1212 (QKDTRAQLVLWDC) the chain is Cytoplasmic. The helical transmembrane segment at 1213 to 1231 (LILYNVTVIISKNMLSLLS) threads the bilayer. Residues 1232–1280 (CVFVEQMQSNFCWVIQLFSLVCTVKGYYDPKEMMTRDRDCLLPVEEAGI) are Extracellular-facing. The helical transmembrane segment at 1281–1297 (IWDSICFFFLLLQRRIF) threads the bilayer. At 1298-1656 (LSHYFLHVSA…ELLLDRRLHI (359 aa)) the chain is on the cytoplasmic side. Residues 1334–1365 (HRQIEEKSLAQLKRQMKRIRAKQEKYRQSQAS) adopt a coiled-coil conformation. 3 disordered regions span residues 1354–1396 (AKQE…RRQW), 1456–1480 (RRERARQERAEQLASGGDLNPDVEP), and 1567–1610 (TLSG…NTRS). A compositionally biased stretch (polar residues) spans 1361-1372 (QSQASRGQLQSK). Residues 1376–1392 (DPSQEPGPDSPGGSSPP) show a composition bias toward low complexity. Residues Ser1385 and Ser1390 each carry the phosphoserine modification. Residues 1592–1610 (SSMTDDTSSPLSTGYNTRS) are compositionally biased toward polar residues. A phosphoserine mark is found at Ser1627, Ser1631, and Ser1646. Residues 1657 to 1700 (PELEEAERFEAQQGRTLRLLRAGYQCVAAHSELLCYFIIILNHM) form a helical membrane-spanning segment. Residues 1701–1704 (VTAS) lie on the Extracellular side of the membrane. The chain crosses the membrane as a helical span at residues 1705 to 1720 (AASLVLPVLVFLWAML). The Cytoplasmic segment spans residues 1721 to 1728 (TIPRPSKR). A helical transmembrane segment spans residues 1729-1747 (FWMTAIVFTEVMVVTKYLF). At 1748–1779 (QFGFFPWNSYVVLRRYENKPYFPPRILGLEKT) the chain is on the extracellular side. Residues 1780-1801 (DSYIKYDLVQLMALFFHRSQLL) traverse the membrane as a helical segment. Residues 1802–1976 (CYGLWDHEED…HTKYRAATDV (175 aa)) lie on the Cytoplasmic side of the membrane. Composition is skewed to basic and acidic residues over residues 1816-1837 (DHCRSSVKDREAKEEPEAKLES) and 1855-1880 (PRDHIQGKGSIRSKDVIQDPPEDLKP). The tract at residues 1816-1931 (DHCRSSVKDR…RPRHTQEKSK (116 aa)) is disordered. The span at 1881–1894 (RHTRHISIRFRRRK) shows a compositional bias: basic residues. Basic and acidic residues predominate over residues 1912-1931 (GEGKETTERKRPRHTQEKSK). The chain crosses the membrane as a helical span at residues 1977 to 1996 (YALMFLADIVDIIIIIFGFW). The Extracellular segment spans residues 1997-2016 (AFGKHSAATDIASSLSDDQV). A helical membrane pass occupies residues 2017–2033 (PQAFLFMLLVQFGTMVI). Over 2034 to 2047 (DRALYLRKTVLGKL) the chain is Cytoplasmic. The helical transmembrane segment at 2048–2068 (AFQVVLVVAIHIWMFFILPAV) threads the bilayer. Topologically, residues 2069 to 2076 (TERMFSQN) are extracellular. Residues 2077–2092 (AVAQLWYFVKCIYFAL) form a helical membrane-spanning segment. At 2093–2192 (SAYQIRCGYP…KKKIVKYGMG (100 aa)) the chain is on the cytoplasmic side. A helical transmembrane segment spans residues 2193–2213 (GLIILFLIAIIWFPLLFMSLI). Over 2214-2457 (RSVVGVVNQP…IFSDKVSPPS (244 aa)) the chain is Extracellular. Cys2437 and Cys2441 form a disulfide bridge. The chain crosses the membrane as a helical span at residues 2458–2478 (LGFLAGYGIVGLYVSIVLVVG). Topologically, residues 2479–2547 (KFVRGFFSEI…TMIKWTRERE (69 aa)) are cytoplasmic.

The protein belongs to the PIEZO (TC 1.A.75) family. As to quaternary structure, homotrimer; the homotrimer forms a propeller-shaped Piezo channel with a cation-ion conducting pore. Heterotrimeric interaction may occur between PIEZO1 and PIEZO2. Interacts with PKD2. Interacts with STOMl3. Interacts with TMC1, TMC2, PCDG15 and CIB2; the interaction may be part of the MET complex. Interacts with MDFIC (via C-terminus); the interaction prolongs Piezo channel inactivation. Interacts with MDFI (via C-terminus); the interaction prolongs Piezo channel inactivation. As to expression, expressed in bladder, colon, kidney and skin. Also expressed in bone marrow, liver, lung, spleen and erythrocytes (at protein level). Expressed in myoblasts (at protein level). Expressed in red blood cells. Expressed in cochlear inner and outer hair cells (IHCs and OHCs) and vestibular organ HCs.

It is found in the endoplasmic reticulum membrane. It localises to the endoplasmic reticulum-Golgi intermediate compartment membrane. The protein localises to the cell membrane. The protein resides in the cell projection. Its subcellular location is the lamellipodium membrane. It carries out the reaction K(+)(in) = K(+)(out). The enzyme catalyses Na(+)(in) = Na(+)(out). The catalysed reaction is Ca(2+)(in) = Ca(2+)(out). It catalyses the reaction Mg(2+)(in) = Mg(2+)(out). Its activity is regulated as follows. Regulated by auxillary subunits MDFIC and MDFI. Down-regulated by phosphatidylserines exposed on the cell surface. Divalent ions decrease the single-channel permeability of K(+). Its function is as follows. Pore-forming subunit of the mechanosensitive non-specific cation Piezo channel required for rapidly adapting mechanically activated (MA) currents and has a key role in sensing touch and tactile pain. Piezo channels are homotrimeric three-blade propeller-shaped structures that utilize a cap-motion and plug-and-latch mechanism to gate their ion-conducting pathways. Generates currents characterized by a linear current-voltage relationship that are sensitive to ruthenium red and gadolinium. Conductance to monovalent alkali ions is highest for K(+), intermediate for Na(+) and lowest for Li(+). Divalent ions except for Mn(2+) permeate the channel but more slowly than the monovalent ions and they also reduce K(+) currents. Plays a key role in epithelial cell adhesion by maintaining integrin activation through R-Ras recruitment to the ER, most probably in its activated state, and subsequent stimulation of calpain signaling. In inner ear hair cells, PIEZO1/2 subunits may constitute part of the mechanotransducer (MET) non-selective cation channel complex where they may act as pore-forming ion-conducting component in the complex. In the kidney, may contribute to the detection of intraluminal pressure changes and to urine flow sensing. Acts as a shear-stress sensor that promotes endothelial cell organization and alignment in the direction of blood flow through calpain activation. Plays a key role in blood vessel formation and vascular structure in both development and adult physiology. Acts as a sensor of phosphatidylserine (PS) flipping at the plasma membrane and governs morphogenesis of muscle cells. In myoblasts, flippase-mediated PS enrichment at the inner leaflet of plasma membrane triggers channel activation and Ca(2+) influx followed by Rho GTPases signal transduction, leading to assembly of cortical actomyosin fibers and myotube formation. The chain is Piezo-type mechanosensitive ion channel component 1 from Mus musculus (Mouse).